Consider the following 92-residue polypeptide: MSRSIKKGPYVHFKLLKNTNNLNLSNSKRVIKTWSRSSVILPSMVGHTIAVHNGKIHVPIFISDQMVGHKLGEFAFTRSFRSHAKIDKKIRK.

The protein belongs to the universal ribosomal protein uS19 family.

It is found in the plastid. It localises to the chloroplast. Its function is as follows. Protein S19 forms a complex with S13 that binds strongly to the 16S ribosomal RNA. The sequence is that of Small ribosomal subunit protein uS19c from Cyanidium caldarium (Red alga).